A 992-amino-acid polypeptide reads, in one-letter code: Meckelin (992 aa).

The N-terminal stretch at Met1 to Trp35 is a signal peptide. The Extracellular segment spans residues Ala36 to Asp516. Positions Gln37–Gly280 are cysteine-rich. Disulfide bonds link Cys49/Cys62, Cys65/Cys78, Cys80/Cys97, Cys100/Cys114, Cys117/Cys127, Cys129/Cys150, Cys153/Cys170, Cys173/Cys184, Cys186/Cys197, Cys237/Cys246, Cys253/Cys268, and Cys354/Cys375. N-linked (GlcNAc...) asparagine glycosylation is present at Asn242. The chain crosses the membrane as a helical span at residues Ala517–Arg545. Residues Arg546–Gln555 are Cytoplasmic-facing. A helical transmembrane segment spans residues Thr556–Phe587. Residues Lys588–Pro600 lie on the Extracellular side of the membrane. A helical transmembrane segment spans residues Val601–Gln628. Residues Ile629–Thr667 lie on the Cytoplasmic side of the membrane. Residues Tyr668 to Glu676 constitute an intramembrane region (helical). The discontinuously helical transmembrane segment at Tyr668–Val698 threads the bilayer. Residues Ile677 to Pro685 lie within the membrane without spanning it. The helical intramembrane region spans Leu686–Val698. Over Val699–Leu728 the chain is Extracellular. The helical intramembrane region spans Arg729–Arg754. Residues Arg729–Ser768 form a discontinuously helical membrane-spanning segment. An intramembrane segment occupies Phe755 to Lys759. An intramembrane region (helical) is located at residues Ile760–Ser768. Topologically, residues Met769–Ser923 are cytoplasmic. Residues Phe924–Ser926 constitute an intramembrane region (helical). A discontinuously helical transmembrane segment spans residues Phe924–Leu949. An intramembrane segment occupies Val927 to Glu933. The helical intramembrane region spans Ala934–Leu949. The Extracellular segment spans residues Ala950–Phe954. Residues Val955–Thr982 form a helical membrane-spanning segment. Residues Lys983–Ile992 lie on the Cytoplasmic side of the membrane.

As to quaternary structure, homodimer. Part of the tectonic-like complex (also named B9 complex). Interacts with DNAJB9, DNAJC10 and mutated SFTPC. Interacts with SYNE2 during the early establishment of cell polarity. Interacts (via C-terminus) with FLNA. Interacts with TMEM218. Interacts with WNT5A. Interacts with ROR2.

Its subcellular location is the cell membrane. The protein localises to the endoplasmic reticulum membrane. It localises to the cytoplasm. It is found in the cytoskeleton. The protein resides in the cilium basal body. Its function is as follows. Part of the tectonic-like complex which is required for tissue-specific ciliogenesis and may regulate ciliary membrane composition. Involved in centrosome migration to the apical cell surface during early ciliogenesis. Required for ciliary structure and function, including a role in regulating length and appropriate number through modulating centrosome duplication. Is a key regulator of stereociliary bundle orientation. Required for epithelial cell branching morphology. Essential for endoplasmic reticulum-associated degradation (ERAD) of surfactant protein C (sftpc). Involved in the negative regulation of canonical Wnt signaling, and activation of the non-canonical cascade stimulated by WNT5A. In non-canonical Wnt signaling, it may act as ROR2 coreceptor. The polypeptide is Meckelin (Tmem67) (Rattus norvegicus (Rat)).